We begin with the raw amino-acid sequence, 153 residues long: Deoxyuridine 5'-triphosphate nucleotidohydrolase (153 aa).

Substrate contacts are provided by residues 71-73 (RSG), Asn-84, 88-90 (LID), and Met-98.

This sequence belongs to the dUTPase family. The cofactor is Mg(2+).

It carries out the reaction dUTP + H2O = dUMP + diphosphate + H(+). Its pathway is pyrimidine metabolism; dUMP biosynthesis; dUMP from dCTP (dUTP route): step 2/2. Functionally, this enzyme is involved in nucleotide metabolism: it produces dUMP, the immediate precursor of thymidine nucleotides and it decreases the intracellular concentration of dUTP so that uracil cannot be incorporated into DNA. The polypeptide is Deoxyuridine 5'-triphosphate nucleotidohydrolase (Hydrogenovibrio crunogenus (strain DSM 25203 / XCL-2) (Thiomicrospira crunogena)).